We begin with the raw amino-acid sequence, 1165 residues long: Vacuolar segregation protein 7 (1165 aa).

The Cytoplasmic segment spans residues 1 to 919 (MTEEDRKLTV…RKSPFVKVKN (919 aa)). The disordered stretch occupies residues 118–147 (SVSSTNNNSNNALINHNPLSSHLSNPSSSL). Serine 164 is subject to Phosphoserine. Disordered regions lie at residues 215–241 (SNNT…LPSL), 274–423 (KAKN…SEKP), 461–497 (LIFP…SAPL), and 560–668 (EPPH…KRPL). The segment covering 216-230 (NNTAPSTSNNIGSNT) has biased composition (polar residues). Residues 334–345 (TTSTKTAPSTAP) show a composition bias toward low complexity. The segment covering 346 to 367 (LGSTDNTQALTASVSSSNADNH) has biased composition (polar residues). Low complexity predominate over residues 375 to 391 (SSNNNGNNSNSASNKTN). Polar residues predominate over residues 393–412 (DIKNSNADLSASTSNNNAIN). The span at 413-423 (DDSHESNSEKP) shows a compositional bias: basic and acidic residues. 2 stretches are compositionally biased toward low complexity: residues 469 to 485 (QQQQ…QQQQ) and 562 to 571 (PHQLQQQQPP). Positions 576–587 (SVDSYTSDNPDS) are enriched in polar residues. The segment covering 599 to 613 (SLVSLSKVSPHLLSS) has biased composition (low complexity). Polar residues predominate over residues 614 to 662 (TSSNGNTISCPNVATNSQELEPNNDISTKKSLSNSTLRHSSANRNSNYG). Residues 920–940 (FLYLAFVISSLLMTGFILGFL) traverse the membrane as a helical; Signal-anchor for type II membrane protein segment. At 941 to 1165 (LATNKELQDV…KDSMVHPGKK (225 aa)) the chain is on the vacuolar side. Residues asparagine 1020 and asparagine 1099 are each glycosylated (N-linked (GlcNAc...) asparagine). The tract at residues 1074 to 1121 (SPGSREAKHENDDDDDDDGDDGDDENNTNERQYKSKPNARDDKEDDTK) is disordered. The span at 1085–1100 (DDDDDDDGDDGDDENN) shows a compositional bias: acidic residues. Residues 1111 to 1121 (NARDDKEDDTK) are compositionally biased toward basic and acidic residues.

Component of the PI(3,5)P2 regulatory complex, composed of ATG18, FIG4, FAB1, VAC14 and VAC7. VAC14 nucleates the assembly of the complex and serves as a scaffold. In terms of processing, N-glycosylated.

It is found in the vacuole membrane. Its function is as follows. The PI(3,5)P2 regulatory complex regulates both the synthesis and turnover of phosphatidylinositol 3,5-bisphosphate (PtdIns(3,5)P2). Positively regulates FAB1 kinase activity. Major activator of FAB1 during hyperosmotic shock and can elevate levels of PtdIns(3,5)P2 in the absence of VAC14 and FIG4. Directly involved in vacuolar membrane scission. Required for normal vacuole acidification, inheritance and morphology. This chain is Vacuolar segregation protein 7 (VAC7), found in Saccharomyces cerevisiae (strain ATCC 204508 / S288c) (Baker's yeast).